The sequence spans 620 residues: MGKIIGIDLGTTNSCVAVMEGGKPVVIANTEGSRTTPSVVAFTKTGERIVGEPAKRQAVTNADKTISSIKRHMGTDFRVSIDDKKFTPQEISAMVLQKLKADAEGYLGEKISEAVITVPAYFNDAQRQATKDAGKIAGLDVKRIINEPTAAALAYGLDNEHEQKIMVYDLGGGTFDVSIIEIGDGVIEVLATSGDNRLGGDDFDERVTRYFIDEFKKAEGVDLSTDKMALQRLREAAEKAKKELSSATTTNINLPFITATSEGPKHFDLNLTRAKFDELTHDLVERTAIPVQNALRDAGLAPSELGKVLLVGGSTRIPAVQDKVKQLTGHEPSKSLNPDECVAIGASVQGGKLAGDTGAGDILLLDVTPLSLSIETMGGIATRLIERNTTIPSKKSQIFSTAADNQTAVDINVVQGERQFAKDNKSLGQFRLDGIPPARRGIPQIEVTFDIDANGIVNVSAKDLGTGKEQHITITAGSNMSDSDIDKAVREAAEYEAQDKKRKDAVDTRNDADSIVFQTEKALSEVGDKVSADEKTAVEADLNHLKDLVAKANPEVMSEGEVEDMKAAKEKLMNSAQALFAKLYESAQGAAGAGPDMSGAGPQGDTYAGDDVVDGDYREV.

The residue at position 174 (Thr-174) is a Phosphothreonine; by autocatalysis. The interval 590 to 620 is disordered; it reads AAGAGPDMSGAGPQGDTYAGDDVVDGDYREV.

It belongs to the heat shock protein 70 family.

In terms of biological role, acts as a chaperone. The protein is Chaperone protein DnaK of Lachnoclostridium phytofermentans (strain ATCC 700394 / DSM 18823 / ISDg) (Clostridium phytofermentans).